A 163-amino-acid polypeptide reads, in one-letter code: Ubiquitin-like protein 1-ribosomal protein eS31 fusion protein (163 aa).

In terms of domain architecture, Ubiquitin-like spans 1–70 (MVFVKTLNRT…IYVNLELLGG (70 aa)). A Glycyl lysine isopeptide (Gly-Lys) (interchain with K-? in acceptor proteins) cross-link involves residue G70. The C4-type zinc finger occupies 115–138 (CQQPSCGGGVFMAQHANRHYCGRC).

In the N-terminal section; belongs to the ubiquitin family. The protein in the C-terminal section; belongs to the eukaryotic ribosomal protein eS31 family.

In Caenorhabditis briggsae, this protein is Ubiquitin-like protein 1-ribosomal protein eS31 fusion protein (ubl-1).